Reading from the N-terminus, the 241-residue chain is MSAIKDESNNDHLVQSHDPEHPANLIPALCRNFYGHGWVTGTGGGASIKRDNHIFIAPSGVQKELIQPHNIFVLQYPTPKYPPSARQYIRKPLELKPSACTPLFLAAFDRGAGCCIHTHSQWAVLVTLLVEREKGLEGCFEISNIEQIKGIPKGKGKGMMGFFDTLKIPIIENTAFEEDLTSSLEEAMEKYPDTYAVLVRRHGIYVWGDDVAKAKTQCESLDYLFQLAVEMHKLGLPWVKP.

Cysteine 100 lines the substrate pocket. 2 residues coordinate Zn(2+): histidine 117 and histidine 119. Glutamate 146 functions as the Proton donor/acceptor in the catalytic mechanism. Residue histidine 202 participates in Zn(2+) binding.

The protein belongs to the aldolase class II family. MtnB subfamily. The cofactor is Zn(2+).

Its subcellular location is the cytoplasm. The enzyme catalyses 5-(methylsulfanyl)-D-ribulose 1-phosphate = 5-methylsulfanyl-2,3-dioxopentyl phosphate + H2O. It participates in amino-acid biosynthesis; L-methionine biosynthesis via salvage pathway; L-methionine from S-methyl-5-thio-alpha-D-ribose 1-phosphate: step 2/6. Its function is as follows. Catalyzes the dehydration of methylthioribulose-1-phosphate (MTRu-1-P) into 2,3-diketo-5-methylthiopentyl-1-phosphate (DK-MTP-1-P). The polypeptide is Methylthioribulose-1-phosphate dehydratase (Ajellomyces dermatitidis (strain ER-3 / ATCC MYA-2586) (Blastomyces dermatitidis)).